A 179-amino-acid chain; its full sequence is Bifunctional protein PyrR (179 aa).

The PRPP-binding motif lies at 99-111 (VILVDDVLYTGRT).

The protein belongs to the purine/pyrimidine phosphoribosyltransferase family. PyrR subfamily. As to quaternary structure, homodimer and homohexamer; in equilibrium.

The catalysed reaction is UMP + diphosphate = 5-phospho-alpha-D-ribose 1-diphosphate + uracil. Its function is as follows. Regulates transcriptional attenuation of the pyrimidine nucleotide (pyr) operon by binding in a uridine-dependent manner to specific sites on pyr mRNA. This disrupts an antiterminator hairpin in the RNA and favors formation of a downstream transcription terminator, leading to a reduced expression of downstream genes. In terms of biological role, also displays a weak uracil phosphoribosyltransferase activity which is not physiologically significant. The chain is Bifunctional protein PyrR from Brevibacillus brevis (strain 47 / JCM 6285 / NBRC 100599).